A 216-amino-acid chain; its full sequence is Orotate phosphoribosyltransferase (216 aa).

Lys30 serves as a coordination point for 5-phospho-alpha-D-ribose 1-diphosphate. 38–39 (FF) provides a ligand contact to orotate. 5-phospho-alpha-D-ribose 1-diphosphate contacts are provided by residues 75-76 (YK), Arg102, Lys103, Lys106, His108, and 128-136 (DDVITAGTA). Orotate is bound by residues Thr132 and Arg160.

Belongs to the purine/pyrimidine phosphoribosyltransferase family. PyrE subfamily. In terms of assembly, homodimer. Requires Mg(2+) as cofactor.

It carries out the reaction orotidine 5'-phosphate + diphosphate = orotate + 5-phospho-alpha-D-ribose 1-diphosphate. It functions in the pathway pyrimidine metabolism; UMP biosynthesis via de novo pathway; UMP from orotate: step 1/2. In terms of biological role, catalyzes the transfer of a ribosyl phosphate group from 5-phosphoribose 1-diphosphate to orotate, leading to the formation of orotidine monophosphate (OMP). In Acinetobacter baumannii (strain AB307-0294), this protein is Orotate phosphoribosyltransferase.